We begin with the raw amino-acid sequence, 278 residues long: Biotin synthase (278 aa).

The 227-residue stretch at 1 to 227 folds into the Radical SAM core domain; it reads MQIMLCAISN…QSVVMVAGGR (227 aa). C16, C20, and C23 together coordinate [4Fe-4S] cluster. Positions 60, 95, and 153 each coordinate [2Fe-2S] cluster.

Belongs to the radical SAM superfamily. Biotin synthase family. Homodimer. Requires [4Fe-4S] cluster as cofactor. [2Fe-2S] cluster is required as a cofactor.

The catalysed reaction is (4R,5S)-dethiobiotin + (sulfur carrier)-SH + 2 reduced [2Fe-2S]-[ferredoxin] + 2 S-adenosyl-L-methionine = (sulfur carrier)-H + biotin + 2 5'-deoxyadenosine + 2 L-methionine + 2 oxidized [2Fe-2S]-[ferredoxin]. Its pathway is cofactor biosynthesis; biotin biosynthesis; biotin from 7,8-diaminononanoate: step 2/2. Its function is as follows. Catalyzes the conversion of dethiobiotin (DTB) to biotin by the insertion of a sulfur atom into dethiobiotin via a radical-based mechanism. The chain is Biotin synthase from Campylobacter jejuni subsp. jejuni serotype O:6 (strain 81116 / NCTC 11828).